The primary structure comprises 440 residues: C4-dicarboxylate transport protein (440 aa).

8 helical membrane-spanning segments follow: residues 8–28, 40–60, 74–94, 147–167, 187–207, 221–241, 288–308, and 354–374; these read LYLQ…LFPA, FIKL…VTGI, LKGL…GLVV, GDIL…AALK, IVGF…AFTV, LIAC…GLVL, VVGL…SIYL, and AATL…LLGV. Positions 419–440 are disordered; the sequence is EEVEPANEPEPPAVPAGAGLHG.

The protein belongs to the dicarboxylate/amino acid:cation symporter (DAACS) (TC 2.A.23) family.

It localises to the cell inner membrane. Functionally, responsible for the transport of dicarboxylates such as succinate, fumarate, and malate from the periplasm across the membrane. The protein is C4-dicarboxylate transport protein of Anaeromyxobacter dehalogenans (strain 2CP-1 / ATCC BAA-258).